A 349-amino-acid polypeptide reads, in one-letter code: Draxin (349 aa).

A signal peptide spans 1–25 (MAGPAIHTAPMLFLVLLLPLELSLA). 3 disordered regions span residues 38 to 79 (PENH…QDGA), 118 to 145 (PYPEKENRPPGWERTRKRSREHKRRRDR), and 244 to 273 (DGWPSAKKKEKHRGKLSSDGNETSPAEGEP). The segment covering 120–131 (PEKENRPPGWER) has biased composition (basic and acidic residues). Basic residues-rich tracts occupy residues 132–145 (TRKRSREHKRRRDR) and 249–258 (AKKKEKHRGK). N-linked (GlcNAc...) asparagine glycosylation occurs at N264.

The protein belongs to the draxin family. Interacts with LRP6.

It is found in the secreted. Chemorepulsive axon guidance protein required for the development of spinal cord and forebrain commissures. Acts as a chemorepulsive guidance protein for commissural axons during development. Able to inhibit or repel neurite outgrowth from dorsal spinal cord. Inhibits the stabilization of cytosolic beta-catenin (CTNNB1) via its interaction with LRP6, thereby acting as an antagonist of Wnt signaling pathway. In Homo sapiens (Human), this protein is Draxin.